Reading from the N-terminus, the 325-residue chain is Lipid droplet-associated hydrolase (325 aa).

Ser139 serves as the catalytic Nucleophile. Residues Asp271 and His300 each act as charge relay system in the active site.

Belongs to the AB hydrolase superfamily. LDAH family. In terms of tissue distribution, present in macrophage-rich areas in atherosclerotic lesions (at protein level). Expressed in monocytes and monocyte-derived macrophages (at protein level).

It localises to the lipid droplet. It is found in the endoplasmic reticulum. It carries out the reaction a cholesterol ester + H2O = cholesterol + a fatty acid + H(+). Functionally, probable serine lipid hydrolase associated with lipid droplets. Has low cholesterol esterase activity. Appears to lack triglyceride lipase activity. Involved in cholesterol and triglyceride homeostasis; has opposing effects, stimulating cellular triglyceride accumulation and cellular cholesterol release. Acts antagonistically with PNPLA2/ATGL in regulation of cellular lipid stores. May regulate triglyceride accumulation indirectly through stimulation of PNPLA2/ATGL ubiquitination and proteasomal degradation. Promotes microtubule-dependent lipid droplet fusion. Highly expressed in macrophage-rich areas in atherosclerotic lesions, suggesting that it could promote cholesterol ester turnover in macrophages. The protein is Lipid droplet-associated hydrolase of Homo sapiens (Human).